The following is a 246-amino-acid chain: Probable transcriptional regulatory protein Dole_0371 (246 aa).

Belongs to the TACO1 family.

The protein localises to the cytoplasm. In Desulfosudis oleivorans (strain DSM 6200 / JCM 39069 / Hxd3) (Desulfococcus oleovorans), this protein is Probable transcriptional regulatory protein Dole_0371.